The chain runs to 96 residues: Probable quinol oxidase subunit 4 (96 aa).

3 consecutive transmembrane segments (helical) span residues 8 to 28 (TVGF…TLYT), 36 to 56 (LTII…MFMH), and 68 to 88 (FKVI…YWVM).

It belongs to the cytochrome c oxidase bacterial subunit 4 family.

The protein resides in the cell membrane. It carries out the reaction 2 a quinol + O2 = 2 a quinone + 2 H2O. Its function is as follows. Catalyzes quinol oxidation with the concomitant reduction of oxygen to water. This is Probable quinol oxidase subunit 4 (qoxD) from Staphylococcus aureus (strain USA300).